A 426-amino-acid chain; its full sequence is Serine/threonine-protein kinase SRPK (426 aa).

A compositionally biased stretch (basic and acidic residues) spans Met-1 to Asp-23. The segment at Met-1 to Lys-40 is disordered. The span at Ser-24–Thr-35 shows a compositional bias: acidic residues. One can recognise a Protein kinase domain in the interval Tyr-56–Met-419. ATP is bound by residues Leu-62 to Val-70 and Lys-86. Asp-188 (proton acceptor) is an active-site residue. The Nuclear localization signal signature appears at Pro-318 to Asp-328.

Belongs to the protein kinase superfamily. CMGC Ser/Thr protein kinase family.

The protein resides in the nucleus. It catalyses the reaction L-seryl-[protein] + ATP = O-phospho-L-seryl-[protein] + ADP + H(+). The catalysed reaction is L-threonyl-[protein] + ATP = O-phospho-L-threonyl-[protein] + ADP + H(+). In terms of biological role, phosphorylates serine/arginine-rich protein PSR. This is Serine/threonine-protein kinase SRPK from Physarum polycephalum (Slime mold).